The following is a 367-amino-acid chain: Protein-glutamate methylesterase/protein-glutamine glutaminase 1 (367 aa).

The Response regulatory domain maps to 9 to 126; the sequence is KVLCVDDSAL…RDGMLDYSEK (118 aa). The residue at position 60 (aspartate 60) is a 4-aspartylphosphate. The CheB-type methylesterase domain occupies 168 to 360; the sequence is LVSTEKLIIV…RRIMARLASM (193 aa). Catalysis depends on residues serine 180, histidine 206, and aspartate 302.

This sequence belongs to the CheB family. Post-translationally, phosphorylated by CheA. Phosphorylation of the N-terminal regulatory domain activates the methylesterase activity.

It is found in the cytoplasm. It carries out the reaction [protein]-L-glutamate 5-O-methyl ester + H2O = L-glutamyl-[protein] + methanol + H(+). The enzyme catalyses L-glutaminyl-[protein] + H2O = L-glutamyl-[protein] + NH4(+). Involved in chemotaxis. Part of a chemotaxis signal transduction system that modulates chemotaxis in response to various stimuli. Catalyzes the demethylation of specific methylglutamate residues introduced into the chemoreceptors (methyl-accepting chemotaxis proteins or MCP) by CheR. Also mediates the irreversible deamidation of specific glutamine residues to glutamic acid. The chain is Protein-glutamate methylesterase/protein-glutamine glutaminase 1 from Burkholderia pseudomallei (strain K96243).